The chain runs to 438 residues: Trigger factor (438 aa).

The PPIase FKBP-type domain maps to 163–248 (GDKLNIDFEG…VKRIETTEAR (86 aa)).

The protein belongs to the FKBP-type PPIase family. Tig subfamily.

It is found in the cytoplasm. It carries out the reaction [protein]-peptidylproline (omega=180) = [protein]-peptidylproline (omega=0). Its function is as follows. Involved in protein export. Acts as a chaperone by maintaining the newly synthesized protein in an open conformation. Functions as a peptidyl-prolyl cis-trans isomerase. The chain is Trigger factor from Syntrophomonas wolfei subsp. wolfei (strain DSM 2245B / Goettingen).